A 59-amino-acid chain; its full sequence is MAELKITQVRSTIGARWKQRESLRTLGLRKIRQSVVREDNAQTRGLIKTVHHLVTVEEV.

The protein belongs to the universal ribosomal protein uL30 family. Part of the 50S ribosomal subunit.

This Mycolicibacterium vanbaalenii (strain DSM 7251 / JCM 13017 / BCRC 16820 / KCTC 9966 / NRRL B-24157 / PYR-1) (Mycobacterium vanbaalenii) protein is Large ribosomal subunit protein uL30.